The following is an 883-amino-acid chain: Aryl hydrocarbon receptor (883 aa).

A propeptide spanning residues 1-9 is cleaved from the precursor; it reads MSSGANITY. Positions 1-38 are disordered; that stretch reads MSSGANITYASRKRRKPVQKTVKPIPAEGIKSNPSKRH. 2 short sequence motifs (nuclear localization signal) span residues 12-15 and 36-41; these read RKRR and KRHRDR. Residues 26–79 enclose the bHLH domain; sequence PAEGIKSNPSKRHRDRLNTELDRLASLLPFPQDVINKLDKLSVLRLSVSYLRAK. The interval 37 to 65 is DNA-binding; the sequence is RHRDRLNTELDRLASLLPFPQDVINKLDK. Required for maintaining the overall integrity of the AHR:ARNT heterodimer and its transcriptional activity stretches follow at residues 49–81, 116–124, and 260–262; these read LASL…AKSF, LLQALNGFV, and FAI. Residues 63 to 71 carry the Nuclear export signal motif; the sequence is LDKLSVLRL. The region spanning 111-175 is the PAS 1 domain; the sequence is QEGEFLLQAL…AEFQRQLHWA (65 aa). A PAS 2 domain is found at 266 to 336; that stretch reads LQPPSILEIR…CAESHIRMIK (71 aa). The PAC domain occupies 342-383; sequence MTVFRLLAKHSRWRWVQSNARLIYRNGRPDYIIATQRPLTDE. The disordered stretch occupies residues 421–449; the sequence is LPIRTKSNTSRKDWAPQSTPSKDSFHPSS. A compositionally biased stretch (polar residues) spans 436 to 449; it reads PQSTPSKDSFHPSS.

Homodimer. Heterodimer; efficient DNA binding requires dimerization with another bHLH protein. Interacts with ARNT; the heterodimer ARNT:AHR binds to core DNA sequence 5'-TGCGTG-3' within the dioxin response element (DRE) of target gene promoters and activates their transcription. Binds MYBBP1A. Interacts with coactivators including SRC-1, RIP140 and NOCA7, and with the corepressor SMRT. Interacts with NEDD8 and IVNS1ABP. Interacts with BMAL1. Interacts with HSP90AB1. Interacts with TIPARP; leading to mono-ADP-ribosylation of AHR and subsequent inhibition of AHR. In terms of processing, mono-ADP-ribosylated, leading to inhibit transcription activator activity of AHR.

The protein resides in the cytoplasm. The protein localises to the nucleus. Ligand-activated transcription factor that enables cells to adapt to changing conditions by sensing compounds from the environment, diet, microbiome and cellular metabolism, and which plays important roles in development, immunity and cancer. Upon ligand binding, translocates into the nucleus, where it heterodimerizes with ARNT and induces transcription by binding to xenobiotic response elements (XRE). Regulates a variety of biological processes, including angiogenesis, hematopoiesis, drug and lipid metabolism, cell motility and immune modulation. Xenobiotics can act as ligands: upon xenobiotic-binding, activates the expression of multiple phase I and II xenobiotic chemical metabolizing enzyme genes (such as the CYP1A1 gene). Mediates biochemical and toxic effects of halogenated aromatic hydrocarbons. Next to xenobiotics, natural ligands derived from plants, microbiota, and endogenous metabolism are potent AHR agonists. Tryptophan (Trp) derivatives constitute an important class of endogenous AHR ligands. Acts as a negative regulator of anti-tumor immunity: indoles and kynurenic acid generated by Trp catabolism act as ligand and activate AHR, thereby promoting AHR-driven cancer cell motility and suppressing adaptive immunity. Regulates the circadian clock by inhibiting the basal and circadian expression of the core circadian component PER1. Inhibits PER1 by repressing the CLOCK-BMAL1 heterodimer mediated transcriptional activation of PER1. The heterodimer ARNT:AHR binds to core DNA sequence 5'-TGCGTG-3' within the dioxin response element (DRE) of target gene promoters and activates their transcription. This Mus musculus molossinus (Japanese house mouse) protein is Aryl hydrocarbon receptor (Ahr).